Here is a 185-residue protein sequence, read N- to C-terminus: Gastrokine-1 (185 aa).

The first 20 residues, 1 to 20 (MKFTIVFAGLLGVFLAPALA), serve as a signal peptide directing secretion. The 97-residue stretch at 54–150 (NNGWDSWNSI…MCRGIPTYMA (97 aa)) folds into the BRICHOS domain. An intrachain disulfide couples Cys-81 to Cys-142.

Belongs to the gastrokine family. Expressed in stomach (at protein level). No expression is detected in cancer tissue or gastric cancer cell lines.

The protein resides in the secreted. Its subcellular location is the cytoplasmic granule. It is found in the golgi apparatus. In terms of biological role, has mitogenic activity and may be involved in maintaining the integrity of the gastric mucosal epithelium. The polypeptide is Gastrokine-1 (GKN1) (Homo sapiens (Human)).